A 189-amino-acid polypeptide reads, in one-letter code: Urease accessory protein UreF (189 aa).

It belongs to the UreF family. In terms of assembly, ureD, UreF and UreG form a complex that acts as a GTP-hydrolysis-dependent molecular chaperone, activating the urease apoprotein by helping to assemble the nickel containing metallocenter of UreC. The UreE protein probably delivers the nickel.

The protein resides in the cytoplasm. Functionally, required for maturation of urease via the functional incorporation of the urease nickel metallocenter. This chain is Urease accessory protein UreF, found in Staphylococcus xylosus.